The following is a 316-amino-acid chain: Pantothenate kinase (316 aa).

95-102 (GSVAVGKS) contributes to the ATP binding site.

This sequence belongs to the prokaryotic pantothenate kinase family.

The protein localises to the cytoplasm. The catalysed reaction is (R)-pantothenate + ATP = (R)-4'-phosphopantothenate + ADP + H(+). Its pathway is cofactor biosynthesis; coenzyme A biosynthesis; CoA from (R)-pantothenate: step 1/5. This chain is Pantothenate kinase, found in Shigella dysenteriae serotype 1 (strain Sd197).